The chain runs to 250 residues: MWLGVITLFPEMFRAITDFGVTGRAIKNGLLELHTWNPRDFTHDRHRTVDDRPYGGGPGMLMMVQPLKDAIQAARTAAGDGAKVIYLSPQGRKLTQRGATELAETQKLILVCGRYEGIDERIIQTEVDEEWSIGDYVLSGGELPAMTLIDAVSRLVPGVLGKQASAEQDSFSDGLLDCPHYTRPESLDGLEVPAVLLGGNHEDIRRWRLKQSLGRTFLRRPELFENLALTDEQTRLLAQFVDEMDSPQKS.

S-adenosyl-L-methionine-binding positions include glycine 113 and 133–138 (IGDYVL).

This sequence belongs to the RNA methyltransferase TrmD family. As to quaternary structure, homodimer.

It localises to the cytoplasm. It carries out the reaction guanosine(37) in tRNA + S-adenosyl-L-methionine = N(1)-methylguanosine(37) in tRNA + S-adenosyl-L-homocysteine + H(+). In terms of biological role, specifically methylates guanosine-37 in various tRNAs. This chain is tRNA (guanine-N(1)-)-methyltransferase, found in Shewanella amazonensis (strain ATCC BAA-1098 / SB2B).